The chain runs to 641 residues: Protein zwilch (641 aa).

Ser312 carries the post-translational modification Phosphoserine.

The protein belongs to the ZWILCH family. Component of the RZZ complex composed of rod, Zw10 and Zwilch.

It is found in the cytoplasm. The protein localises to the chromosome. It localises to the centromere. The protein resides in the kinetochore. Its subcellular location is the cytoskeleton. It is found in the spindle. Functionally, essential component of the mitotic checkpoint, which prevents cells from prematurely exiting mitosis. Required for the assembly of the dynein-dynactin, Mad2 complexes and spindly/CG15415 onto kinetochores. Its function related to the spindle assembly machinery is proposed to depend on its association in the RZZ complex. Failure to assemble the complex due to the absence of any one of its components, results in the incorrect redistribution of the remaining components to diverse membrane compartments. The sequence is that of Protein zwilch from Drosophila melanogaster (Fruit fly).